A 282-amino-acid polypeptide reads, in one-letter code: Cell division protein FtsQ (282 aa).

Residues 1–30 are Cytoplasmic-facing; that stretch reads MINIGPPKKRRLRRKGNRFKKTRRVIPWRR. A helical transmembrane segment spans residues 31–51; it reads LMIGALWGTMALASLGMVVAV. Residues 52–282 lie on the Periplasmic side of the membrane; it reads ACFAGQMLFA…LDAGELRGKG (231 aa). The region spanning 65-133 is the POTRA domain; it reads FKVERIQVEN…DQLVIRVDER (69 aa).

It belongs to the FtsQ/DivIB family. FtsQ subfamily.

The protein localises to the cell inner membrane. Its function is as follows. Essential cell division protein. The sequence is that of Cell division protein FtsQ from Syntrophotalea carbinolica (strain DSM 2380 / NBRC 103641 / GraBd1) (Pelobacter carbinolicus).